The sequence spans 850 residues: Lon protease (850 aa).

In terms of domain architecture, Lon N-terminal spans 38–232 (LPVLPLRDVV…LLVGLVDGEI (195 aa)). 384-391 (GPPGVGKT) contributes to the ATP binding site. The Lon proteolytic domain occupies 634–815 (ENEIGLVTGL…DEVLDLALER (182 aa)). Catalysis depends on residues Ser-721 and Lys-764. Positions 819 to 850 (PKKAGKEKARKTAPRVAVRGKSRSTPGTRVKH) are disordered. Over residues 821 to 840 (KAGKEKARKTAPRVAVRGKS) the composition is skewed to basic residues. Over residues 841 to 850 (RSTPGTRVKH) the composition is skewed to polar residues.

Belongs to the peptidase S16 family. Homohexamer. Organized in a ring with a central cavity.

The protein localises to the cytoplasm. It catalyses the reaction Hydrolysis of proteins in presence of ATP.. In terms of biological role, ATP-dependent serine protease that mediates the selective degradation of mutant and abnormal proteins as well as certain short-lived regulatory proteins. Required for cellular homeostasis and for survival from DNA damage and developmental changes induced by stress. Degrades polypeptides processively to yield small peptide fragments that are 5 to 10 amino acids long. Binds to DNA in a double-stranded, site-specific manner. This is Lon protease from Xanthomonas oryzae pv. oryzae (strain KACC10331 / KXO85).